Consider the following 647-residue polypeptide: 1-deoxy-D-xylulose-5-phosphate synthase (647 aa).

Thiamine diphosphate-binding positions include His88 and Gly129 to Ala131. Asp160 is a binding site for Mg(2+). Residues Gly161–Ala162, Asn189, Tyr300, and Glu377 contribute to the thiamine diphosphate site. Asn189 lines the Mg(2+) pocket.

The protein belongs to the transketolase family. DXPS subfamily. As to quaternary structure, homodimer. It depends on Mg(2+) as a cofactor. Thiamine diphosphate serves as cofactor.

It carries out the reaction D-glyceraldehyde 3-phosphate + pyruvate + H(+) = 1-deoxy-D-xylulose 5-phosphate + CO2. Its pathway is metabolic intermediate biosynthesis; 1-deoxy-D-xylulose 5-phosphate biosynthesis; 1-deoxy-D-xylulose 5-phosphate from D-glyceraldehyde 3-phosphate and pyruvate: step 1/1. Catalyzes the acyloin condensation reaction between C atoms 2 and 3 of pyruvate and glyceraldehyde 3-phosphate to yield 1-deoxy-D-xylulose-5-phosphate (DXP). The polypeptide is 1-deoxy-D-xylulose-5-phosphate synthase (Dehalococcoides mccartyi (strain CBDB1)).